The primary structure comprises 294 residues: ATP synthase gamma chain (294 aa).

The protein belongs to the ATPase gamma chain family. In terms of assembly, F-type ATPases have 2 components, CF(1) - the catalytic core - and CF(0) - the membrane proton channel. CF(1) has five subunits: alpha(3), beta(3), gamma(1), delta(1), epsilon(1). CF(0) has three main subunits: a, b and c.

It is found in the cell inner membrane. Its function is as follows. Produces ATP from ADP in the presence of a proton gradient across the membrane. The gamma chain is believed to be important in regulating ATPase activity and the flow of protons through the CF(0) complex. This is ATP synthase gamma chain from Paraburkholderia xenovorans (strain LB400).